We begin with the raw amino-acid sequence, 600 residues long: Chaperonin 60 subunit beta 1, chloroplastic (600 aa).

The segment covering 1 to 12 (MASTFTATSSIG) has biased composition (polar residues). The interval 1-23 (MASTFTATSSIGSMVAPNGHKSD) is disordered. A chloroplast-targeting transit peptide spans 1–54 (MASTFTATSSIGSMVAPNGHKSDKKLISKLSSSSFGRRQSVCPRPRRSSSAIVC). A phosphoserine mark is found at Ser101 and Ser478.

Belongs to the chaperonin (HSP60) family. Part of the Cpn60 complex composed of 7 alpha and 7 beta subunits. Can also form a complex composed of 14 beta subunits only. Both complexes show ATPase activity. The Cpn60 complex interacts with the Cpn10 complex. Interacts with RAB during heat stress. Expressed in leaves, stems, petioles and flowers.

The protein resides in the plastid. Its subcellular location is the chloroplast stroma. Its function is as follows. Binds RuBisCO small and large subunits and is implicated in the assembly of the enzyme oligomer. Involved in protein assisted folding. Required for proper plastid division. This is Chaperonin 60 subunit beta 1, chloroplastic (CPN60B1) from Arabidopsis thaliana (Mouse-ear cress).